Reading from the N-terminus, the 168-residue chain is G/U mismatch-specific DNA glycosylase (168 aa).

The protein belongs to the uracil-DNA glycosylase (UDG) superfamily. TDG/mug family. As to quaternary structure, binds DNA as a monomer.

The protein localises to the cytoplasm. The catalysed reaction is Specifically hydrolyzes mismatched double-stranded DNA and polynucleotides, releasing free uracil.. Excises ethenocytosine and uracil, which can arise by alkylation or deamination of cytosine, respectively, from the corresponding mispairs with guanine in ds-DNA. It is capable of hydrolyzing the carbon-nitrogen bond between the sugar-phosphate backbone of the DNA and the mispaired base. The complementary strand guanine functions in substrate recognition. Required for DNA damage lesion repair in stationary-phase cells. The polypeptide is G/U mismatch-specific DNA glycosylase (Salmonella choleraesuis (strain SC-B67)).